The chain runs to 563 residues: Membrane protein insertase YidC (563 aa).

The helical transmembrane segment at 1–21 (MDIKRTILIVALAIVTYVGVL) threads the bilayer. Positions 43 to 62 (APGIPDTAAGTNGSASADVP) are disordered. The next 5 helical transmembrane spans lie at 344-364 (LELT…FWLL), 370-390 (ILGN…GLFF), 440-460 (LGGC…YWVL), 471-491 (WILW…PIIM), and 518-538 (PIIF…YWVV).

Belongs to the OXA1/ALB3/YidC family. Type 1 subfamily. In terms of assembly, interacts with the Sec translocase complex via SecD. Specifically interacts with transmembrane segments of nascent integral membrane proteins during membrane integration.

It is found in the cell inner membrane. Functionally, required for the insertion and/or proper folding and/or complex formation of integral membrane proteins into the membrane. Involved in integration of membrane proteins that insert both dependently and independently of the Sec translocase complex, as well as at least some lipoproteins. Aids folding of multispanning membrane proteins. The chain is Membrane protein insertase YidC from Pseudomonas syringae pv. syringae (strain B728a).